We begin with the raw amino-acid sequence, 298 residues long: Probable mitochondrial 2-oxodicarboxylate carrier (298 aa).

Helical transmembrane passes span 6 to 26 (IPFPVTFAAGAVAGISEVLTL), 62 to 81 (HRLYRGILPPILMEAPKRAL), 105 to 125 (ALSILTGSCAGFTETFVVVPF), 159 to 179 (ALYNGFEATMWRHVVWNAGYF), 203 to 223 (LIAGTIGGIFGTFLSTPFDVI), and 267 to 287 (VLRLGPGGGILLVVFNSVIEF). 3 Solcar repeats span residues 6 to 92 (IPFP…YSKL), 102 to 188 (SSPA…IRNS), and 197 to 287 (GEIR…VIEF).

This sequence belongs to the mitochondrial carrier (TC 2.A.29) family.

The protein localises to the mitochondrion inner membrane. In terms of biological role, transports C5-C7 oxodicarboxylates across the inner membranes of mitochondria. The protein is Probable mitochondrial 2-oxodicarboxylate carrier of Schizosaccharomyces pombe (strain 972 / ATCC 24843) (Fission yeast).